The chain runs to 141 residues: Sporulation-specific cell division protein SsgB (141 aa).

The protein belongs to the SsgA family. In terms of assembly, interacts with SsgA. Interacts with FtsZ (via N-terminus).

It localises to the cell septum. Involved in sporulation-specific cell division. Required for early stages of sporulation. Important in the process of growth cessation prior to sporulation-specific cell division. Recruits cell division protein FtsZ to the future septum sites and tethers the contractile ring structure (Z ring) to the cytoplasmic membrane during sporulation. Stimulates polymerization and filament length of FtsZ in vitro. This is Sporulation-specific cell division protein SsgB from Saccharopolyspora erythraea (strain ATCC 11635 / DSM 40517 / JCM 4748 / NBRC 13426 / NCIMB 8594 / NRRL 2338).